We begin with the raw amino-acid sequence, 146 residues long: Dihydroneopterin aldolase 1 (146 aa).

Residues glutamate 41, tyrosine 73, and 92-93 (LE) each bind substrate. Lysine 119 functions as the Proton donor/acceptor in the catalytic mechanism.

The protein belongs to the DHNA family. In terms of assembly, homooctamer. Forms a hollow cylinder assembled from two ring-shaped tetramers. As to expression, expressed in roots, leaves, stems and siliques.

The catalysed reaction is 7,8-dihydroneopterin = 6-hydroxymethyl-7,8-dihydropterin + glycolaldehyde. It functions in the pathway cofactor biosynthesis; tetrahydrofolate biosynthesis; 2-amino-4-hydroxy-6-hydroxymethyl-7,8-dihydropteridine diphosphate from 7,8-dihydroneopterin triphosphate: step 3/4. Catalyzes the conversion of 7,8-dihydroneopterin into 6-hydroxymethyl-7,8-dihydropterin, a biosynthetic precursor of the vitamin tetrahydrofolate. Can use L-threo-dihydroneopterin and D-erythro-dihydroneopterin as substrates for the formation of 6-hydroxymethyldihydropterin, but it can also catalyze the epimerization of carbon 2' of dihydroneopterin and dihydromonapterin. The chain is Dihydroneopterin aldolase 1 from Arabidopsis thaliana (Mouse-ear cress).